A 373-amino-acid chain; its full sequence is Putative F-box/kelch-repeat protein At2g41360 (373 aa).

Residues 8–54 form the F-box domain; the sequence is WSSLSCLPDEMVLNCLARVPRRYYENISCVSVRLRSLVRTPELYRMR. Kelch repeat units lie at residues 116-162 and 163-208; these read EIYF…VFDG and KIHV…MVSS.

The sequence is that of Putative F-box/kelch-repeat protein At2g41360 from Arabidopsis thaliana (Mouse-ear cress).